The sequence spans 394 residues: Elongation factor Tu 2 (394 aa).

One can recognise a tr-type G domain in the interval 10 to 204 (KPHVNVGTIG…ALDNYIPEPE (195 aa)). A G1 region spans residues 19-26 (GHVDHGKT). A GTP-binding site is contributed by 19–26 (GHVDHGKT). Mg(2+) is bound at residue threonine 26. The G2 stretch occupies residues 60-64 (GITIS). The tract at residues 81–84 (DCPG) is G3. Residues 81-85 (DCPGH) and 136-139 (NKCD) each bind GTP. The G4 stretch occupies residues 136–139 (NKCD). A G5 region spans residues 174–176 (SAL).

This sequence belongs to the TRAFAC class translation factor GTPase superfamily. Classic translation factor GTPase family. EF-Tu/EF-1A subfamily. As to quaternary structure, monomer.

It localises to the cytoplasm. The enzyme catalyses GTP + H2O = GDP + phosphate + H(+). Functionally, GTP hydrolase that promotes the GTP-dependent binding of aminoacyl-tRNA to the A-site of ribosomes during protein biosynthesis. The sequence is that of Elongation factor Tu 2 from Photobacterium profundum (strain SS9).